The sequence spans 671 residues: MHKAPISTLILDSLFSNMMLAEMMNDDQLELLKHQQTGIQPVVPEGCNLYWSSLNVTGPETKPTNFVDRFRNNMPKRRVKEILHNVSGMAESGKLLAILGSSGAGKTTLMNVLTSRNLTNLDVQGSILIDGRRANKWKIREMSAFVQQHDMFVGTMTAREHLQFMARLRMGDQYYSDHERQLRVEQVLTQMGLKKCADTVIGIPNQLKGLSCGEKKRLSFASEILTCPKILFCDEPTSGLDAFMAGHVVQALRSLADNGMTVIITIHQPSSHVYSLFNNVCLMACGRVIYLGPGDQAVPLFEKCGYPCPAYYNPADHLIRTLAVIDSDRATSMKTISKIRQGFLSTDLGQSVLAIGNANKLRAASFVTGSDTSEKTKTFFNQDYNASFWTQFLALFWRSWLTVIRDPNLLSVRLLQILITAFITGIVFFQTPVTPATIISINGIMFNHIRNMNFMLQFPNVPVITAELPIVLRENANGVYRTSAYFLAKNIAELPQYIILPILYNTIVYWMSGLYPNFWNYCFASLVTILITNVAISISYAVATIFANTDVAMTILPIFVVPIMAFGGFFITFDAIPSYFKWLSSLSYFKYGYEALAINEWDSIKVIPECFNSSMTAFALDSCPKNGHQVLESIDFSASHKIFDISILFGMFIGIRIIAYVALLIRSYNNT.

Over 1-408 (MHKAPISTLI…SWLTVIRDPN (408 aa)) the chain is Cytoplasmic. An ABC transporter domain is found at 64 to 310 (TNFVDRFRNN…FEKCGYPCPA (247 aa)). 100 to 107 (GSSGAGKT) serves as a coordination point for ATP. Residues 409–429 (LLSVRLLQILITAFITGIVFF) traverse the membrane as a helical segment. At 430–451 (QTPVTPATIISINGIMFNHIRN) the chain is on the extracellular side. Residues 452–472 (MNFMLQFPNVPVITAELPIVL) traverse the membrane as a helical segment. Residues 473–497 (RENANGVYRTSAYFLAKNIAELPQY) lie on the Cytoplasmic side of the membrane. The helical transmembrane segment at 498–518 (IILPILYNTIVYWMSGLYPNF) threads the bilayer. Residues 519–525 (WNYCFAS) lie on the Extracellular side of the membrane. Residues 526–546 (LVTILITNVAISISYAVATIF) form a helical membrane-spanning segment. Topologically, residues 547 to 550 (ANTD) are cytoplasmic. The chain crosses the membrane as a helical span at residues 551–571 (VAMTILPIFVVPIMAFGGFFI). Residues 572–644 (TFDAIPSYFK…DFSASHKIFD (73 aa)) lie on the Extracellular side of the membrane. Residues 645–665 (ISILFGMFIGIRIIAYVALLI) form a helical membrane-spanning segment. The Cytoplasmic segment spans residues 666-671 (RSYNNT).

This sequence belongs to the ABC transporter superfamily. ABCG family. Eye pigment precursor importer (TC 3.A.1.204) subfamily. In terms of tissue distribution, expressed in the intestine in both larvae and adults. Expressed in the gut of males.

The protein resides in the membrane. Required for efficient RNA interference (RNAi). Plays a role in germline development. This is ABC transporter ATP-binding protein/permease wht-1 from Caenorhabditis elegans.